A 323-amino-acid chain; its full sequence is Aquaporin NIP3-1 (323 aa).

Position 1 is an N-acetylmethionine (methionine 1). Transmembrane regions (helical) follow at residues 45-65 (LIGE…AIVV) and 73-93 (VTLP…IYSI). Residues 102–104 (NPA) carry the NPA 1 motif. 3 helical membrane passes run 122–142 (GYIA…RLVF), 167–187 (TSFV…SAVA), and 196–216 (FAGI…GPIS). Positions 221-223 (NPA) match the NPA 2 motif. A helical membrane pass occupies residues 239-259 (WLYIVSPVIGALSGAWTYGLL).

Belongs to the MIP/aquaporin (TC 1.A.8) family. NIP (TC 1.A.8.12) subfamily.

Its subcellular location is the membrane. In terms of biological role, aquaporins facilitate the transport of water and small neutral solutes across cell membranes. The chain is Aquaporin NIP3-1 (NIP3-1) from Arabidopsis thaliana (Mouse-ear cress).